We begin with the raw amino-acid sequence, 481 residues long: 3-ketoacyl-CoA synthase 8 (481 aa).

The next 2 membrane-spanning stretches (helical) occupy residues 4–24 (LKMV…AMKG) and 44–64 (LQTI…YMLT). The 298-residue stretch at 61 to 358 (YMLTRPKPVY…FFITFVKKKY (298 aa)) folds into the FAE domain. Catalysis depends on residues cysteine 213, histidine 292, histidine 376, histidine 380, histidine 409, and asparagine 413.

It belongs to the thiolase-like superfamily. Chalcone/stilbene synthases family. Expressed in leaves and seedlings.

The protein localises to the endoplasmic reticulum membrane. It carries out the reaction a very-long-chain acyl-CoA + malonyl-CoA + H(+) = a very-long-chain 3-oxoacyl-CoA + CO2 + CoA. The protein operates within lipid metabolism; fatty acid biosynthesis. The chain is 3-ketoacyl-CoA synthase 8 from Arabidopsis thaliana (Mouse-ear cress).